Consider the following 193-residue polypeptide: dCTP deaminase (193 aa).

Residues 110-115, Asp128, 136-138, Tyr171, Lys178, and Gln182 contribute to the dCTP site; these read RSSLAR and VLE. Residue Glu138 is the Proton donor/acceptor of the active site.

The protein belongs to the dCTP deaminase family. In terms of assembly, homotrimer.

It carries out the reaction dCTP + H2O + H(+) = dUTP + NH4(+). It participates in pyrimidine metabolism; dUMP biosynthesis; dUMP from dCTP (dUTP route): step 1/2. Catalyzes the deamination of dCTP to dUTP. In Buchnera aphidicola subsp. Acyrthosiphon pisum (strain APS) (Acyrthosiphon pisum symbiotic bacterium), this protein is dCTP deaminase.